The following is a 546-amino-acid chain: Chaperonin GroEL 2 (546 aa).

ATP contacts are provided by residues 30–33, K51, 87–91, G415, 479–481, and D495; these read TLGP, DGTTT, and NAA. The segment at 524–546 is disordered; that stretch reads APKDAPPAQPAGVPGAGGTGFDF. The segment covering 537-546 has biased composition (gly residues); it reads PGAGGTGFDF.

The protein belongs to the chaperonin (HSP60) family. Forms a cylinder of 14 subunits composed of two heptameric rings stacked back-to-back. Interacts with the co-chaperonin GroES.

It is found in the cytoplasm. The enzyme catalyses ATP + H2O + a folded polypeptide = ADP + phosphate + an unfolded polypeptide.. In terms of biological role, together with its co-chaperonin GroES, plays an essential role in assisting protein folding. The GroEL-GroES system forms a nano-cage that allows encapsulation of the non-native substrate proteins and provides a physical environment optimized to promote and accelerate protein folding. This Burkholderia thailandensis (strain ATCC 700388 / DSM 13276 / CCUG 48851 / CIP 106301 / E264) protein is Chaperonin GroEL 2.